Reading from the N-terminus, the 261-residue chain is Ribosomal RNA small subunit methyltransferase A (261 aa).

Histidine 13, leucine 15, glycine 40, glutamate 61, aspartate 85, and asparagine 105 together coordinate S-adenosyl-L-methionine.

Belongs to the class I-like SAM-binding methyltransferase superfamily. rRNA adenine N(6)-methyltransferase family. RsmA subfamily.

It is found in the cytoplasm. It catalyses the reaction adenosine(1518)/adenosine(1519) in 16S rRNA + 4 S-adenosyl-L-methionine = N(6)-dimethyladenosine(1518)/N(6)-dimethyladenosine(1519) in 16S rRNA + 4 S-adenosyl-L-homocysteine + 4 H(+). Its function is as follows. Specifically dimethylates two adjacent adenosines (A1518 and A1519) in the loop of a conserved hairpin near the 3'-end of 16S rRNA in the 30S particle. May play a critical role in biogenesis of 30S subunits. This Flavobacterium johnsoniae (strain ATCC 17061 / DSM 2064 / JCM 8514 / BCRC 14874 / CCUG 350202 / NBRC 14942 / NCIMB 11054 / UW101) (Cytophaga johnsonae) protein is Ribosomal RNA small subunit methyltransferase A.